A 164-amino-acid polypeptide reads, in one-letter code: UPF0225 protein Shewmr7_1921 (164 aa).

Belongs to the UPF0225 family.

The polypeptide is UPF0225 protein Shewmr7_1921 (Shewanella sp. (strain MR-7)).